A 135-amino-acid polypeptide reads, in one-letter code: Glutaredoxin-C3 (135 aa).

In terms of domain architecture, Glutaredoxin spans 26 to 134 (VARVERLASE…PLLKEAGALW (109 aa)). A disulfide bridge connects residues Cys46 and Cys49. The short motif at 132-135 (ALWL) is the Responsive for interaction with TGA factors element.

This sequence belongs to the glutaredoxin family. CC-type subfamily.

Its subcellular location is the cytoplasm. The protein resides in the nucleus. In terms of biological role, has a glutathione-disulfide oxidoreductase activity in the presence of NADPH and glutathione reductase. Reduces low molecular weight disulfides and proteins. The protein is Glutaredoxin-C3 (GRXC3) of Oryza sativa subsp. japonica (Rice).